We begin with the raw amino-acid sequence, 245 residues long: MHKNGNNGPVIDTKWHYLGPDSEKYGPYMSKDMLFWLQAGYFNDGLQLKTENEPNYHTLGEWSQLLGTHPFSMPVHSLDATIAQMNSMRPHGAMMMVPPGLQNQFQPPMPMRFPPFLPMPLLHQMNQNGPPMGAQMHSQPPSEPIDAGSLSHTPDSENETRLNEQTLQQPPSWLIALGLAGHGRKPHHHQQILAHQHIPQMQHANVATDQVVMKSVECQTEPVEISKEQASRVLSELLGQMVIIN.

A GYF domain is found at 12–60 (DTKWHYLGPDSEKYGPYMSKDMLFWLQAGYFNDGLQLKTENEPNYHTLG). The disordered stretch occupies residues 126 to 166 (NQNGPPMGAQMHSQPPSEPIDAGSLSHTPDSENETRLNEQT).

In terms of biological role, involved in negative regulation of early and late embryonic Notch signaling. This is Suppressor of aph-1 from Caenorhabditis elegans.